Consider the following 446-residue polypeptide: Regulator of drug sensitivity 2 (446 aa).

Residues 15–45 (KTCLFCKRSHVVCDKQRPCSRCVKRDIAHLC) constitute a DNA-binding region (zn(2)-C6 fungal-type). Disordered regions lie at residues 52–106 (VPNE…PKLD) and 158–218 (ASNV…KEES). Polar residues-rich tracts occupy residues 56–70 (MPSQ…NNIQ) and 84–96 (DYQN…SGST). S102 is modified (phosphoserine). Polar residues predominate over residues 160–177 (NVHLENGSQTTQSPLEYQ). Over residues 178–192 (NDNRRDEIGVARQEN) the composition is skewed to basic and acidic residues. Residues 193–206 (RSPTIMSGSSNSIS) show a composition bias toward polar residues. Residues 207–218 (KGDKQDQEKEES) show a composition bias toward basic and acidic residues. The residue at position 231 (T231) is a Phosphothreonine.

In terms of processing, phosphorylated by SNF1 in absence of glucose. The phosphorylation is required for induction of transcription of gluconeogenic genes.

It is found in the cytoplasm. The protein localises to the nucleus. Transcription factor which regulates the expression of genes for gluconeogenesis, the TCA cycle, and glucose metabolism. Involved in the cell wall remodeling process and drug resistance. The sequence is that of Regulator of drug sensitivity 2 (RDS2) from Saccharomyces cerevisiae (strain ATCC 204508 / S288c) (Baker's yeast).